The primary structure comprises 163 residues: 3-isopropylmalate dehydratase small subunit (163 aa).

Belongs to the LeuD family. LeuD type 2 subfamily. In terms of assembly, heterodimer of LeuC and LeuD.

The enzyme catalyses (2R,3S)-3-isopropylmalate = (2S)-2-isopropylmalate. The protein operates within amino-acid biosynthesis; L-leucine biosynthesis; L-leucine from 3-methyl-2-oxobutanoate: step 2/4. Functionally, catalyzes the isomerization between 2-isopropylmalate and 3-isopropylmalate, via the formation of 2-isopropylmaleate. The protein is 3-isopropylmalate dehydratase small subunit of Clostridioides difficile (strain 630) (Peptoclostridium difficile).